Here is a 292-residue protein sequence, read N- to C-terminus: Undecaprenyl-diphosphatase (292 aa).

7 helical membrane passes run Met1–Val21, Phe46–Ile66, Leu90–His110, Ala114–Ala134, Phe192–Pro212, Val225–Trp245, and Val253–Val273.

It belongs to the UppP family.

It is found in the cell inner membrane. The enzyme catalyses di-trans,octa-cis-undecaprenyl diphosphate + H2O = di-trans,octa-cis-undecaprenyl phosphate + phosphate + H(+). Its function is as follows. Catalyzes the dephosphorylation of undecaprenyl diphosphate (UPP). Confers resistance to bacitracin. This chain is Undecaprenyl-diphosphatase, found in Anaeromyxobacter sp. (strain K).